The sequence spans 372 residues: Pre-small/secreted glycoprotein (372 aa).

An N-terminal signal peptide occupies residues 1–32; that stretch reads MEGLSLLQLPRDKFRKSSFFVWVIILFQKAFS. Residue asparagine 40 is glycosylated (N-linked (GlcNAc...) asparagine; by host). Disulfide bonds link cysteine 108-cysteine 135 and cysteine 121-cysteine 147. Residues asparagine 204, asparagine 208, asparagine 238, asparagine 257, and asparagine 268 are each glycosylated (N-linked (GlcNAc...) asparagine; by host). The disordered stretch occupies residues 320 to 340; that stretch reads MRHRRELQREESPTGPPGSIR.

Belongs to the filoviruses glycoprotein family. In terms of assembly, homodimer; disulfide-linked. The homodimers are linked by two disulfide bonds in a parallel orientation. Monomer. This precursor is processed into mature sGP and delta-peptide by host furin or furin-like proteases. The cleavage site corresponds to the furin optimal cleavage sequence [KR]-X-[KR]-R. Post-translationally, N-glycosylated. In terms of processing, O-glycosylated.

Its subcellular location is the secreted. Seems to possess an anti-inflammatory activity as it can reverse the barrier-decreasing effects of TNF alpha. Might therefore contribute to the lack of inflammatory reaction seen during infection in spite the of extensive necrosis and massive virus production. Does not seem to be involved in activation of primary macrophages. Does not seem to interact specifically with neutrophils. Its function is as follows. Viroporin that permeabilizes mammalian cell plasma membranes. It acts by altering permeation of ionic compounds and small molecules. This activity may lead to viral enterotoxic activity. This is Pre-small/secreted glycoprotein (GP) from Sudan ebolavirus (strain Boniface-76) (SEBOV).